A 207-amino-acid chain; its full sequence is Homeobox protein BarH-like 1 (207 aa).

Positions 95–154 form a DNA-binding region, homeobox; it reads GRRSRTVFTELQLMGLEKRFEKQKYLSTPDRIDLAESLGLSQLQVKTWYQNRRMKWKKIV. The interval 157–207 is disordered; sequence GGGLESPTKPKGRPKKNSIPSSEQLSEQERAKETEKPPESPGEPSERQQEE. Over residues 183-207 the composition is skewed to basic and acidic residues; the sequence is EQERAKETEKPPESPGEPSERQQEE.

Belongs to the BAR homeobox family. As to expression, expressed predominantly in the facial primordia, developing stomach, and proximal limbs.

Its subcellular location is the nucleus. In terms of biological role, transcription factor, which is involved in craniofacial development, in odontogenic region definition, and in stomach organogenesis. Binds to a regulatory module of the NCAM promoter. The sequence is that of Homeobox protein BarH-like 1 (BARX1) from Gallus gallus (Chicken).